A 193-amino-acid chain; its full sequence is Ribonuclease HII (193 aa).

In terms of domain architecture, RNase H type-2 spans 3–192; sequence SLVAGIDEVG…VRAVIDRSSA (190 aa). A divalent metal cation is bound by residues aspartate 9, glutamate 10, and aspartate 101.

This sequence belongs to the RNase HII family. Mn(2+) serves as cofactor. It depends on Mg(2+) as a cofactor.

The protein localises to the cytoplasm. It carries out the reaction Endonucleolytic cleavage to 5'-phosphomonoester.. In terms of biological role, endonuclease that specifically degrades the RNA of RNA-DNA hybrids. The chain is Ribonuclease HII from Methylococcus capsulatus (strain ATCC 33009 / NCIMB 11132 / Bath).